The primary structure comprises 314 residues: DNA-directed RNA polymerase subunit alpha (314 aa).

The interval M1–T228 is alpha N-terminal domain (alpha-NTD). Residues K245 to D314 are alpha C-terminal domain (alpha-CTD).

The protein belongs to the RNA polymerase alpha chain family. Homodimer. The RNAP catalytic core consists of 2 alpha, 1 beta, 1 beta' and 1 omega subunit. When a sigma factor is associated with the core the holoenzyme is formed, which can initiate transcription.

It carries out the reaction RNA(n) + a ribonucleoside 5'-triphosphate = RNA(n+1) + diphosphate. Functionally, DNA-dependent RNA polymerase catalyzes the transcription of DNA into RNA using the four ribonucleoside triphosphates as substrates. The polypeptide is DNA-directed RNA polymerase subunit alpha (Geobacillus kaustophilus (strain HTA426)).